We begin with the raw amino-acid sequence, 187 residues long: Protein GrpE (187 aa).

Residues 1–31 (MEKKETKNDAEKNNKQDNKSTKSQKKENLNL) are disordered.

This sequence belongs to the GrpE family. Homodimer.

The protein resides in the cytoplasm. Participates actively in the response to hyperosmotic and heat shock by preventing the aggregation of stress-denatured proteins, in association with DnaK and GrpE. It is the nucleotide exchange factor for DnaK and may function as a thermosensor. Unfolded proteins bind initially to DnaJ; upon interaction with the DnaJ-bound protein, DnaK hydrolyzes its bound ATP, resulting in the formation of a stable complex. GrpE releases ADP from DnaK; ATP binding to DnaK triggers the release of the substrate protein, thus completing the reaction cycle. Several rounds of ATP-dependent interactions between DnaJ, DnaK and GrpE are required for fully efficient folding. This chain is Protein GrpE, found in Borrelia garinii subsp. bavariensis (strain ATCC BAA-2496 / DSM 23469 / PBi) (Borreliella bavariensis).